A 171-amino-acid polypeptide reads, in one-letter code: UPF0398 protein SPy_1647/M5005_Spy1353 (171 aa).

This sequence belongs to the UPF0398 family.

This is UPF0398 protein SPy_1647/M5005_Spy1353 from Streptococcus pyogenes serotype M1.